A 47-amino-acid polypeptide reads, in one-letter code: Large ribosomal subunit protein bL34 (47 aa).

The protein belongs to the bacterial ribosomal protein bL34 family.

The protein is Large ribosomal subunit protein bL34 of Mycobacterium sp. (strain JLS).